The sequence spans 95 residues: Small ribosomal subunit protein uS19 (95 aa).

The interval 76–95 (PTRRFGGHADKKAKKGELKK) is disordered. The span at 82–95 (GHADKKAKKGELKK) shows a compositional bias: basic and acidic residues.

It belongs to the universal ribosomal protein uS19 family.

Functionally, protein S19 forms a complex with S13 that binds strongly to the 16S ribosomal RNA. The polypeptide is Small ribosomal subunit protein uS19 (Thermotoga neapolitana (strain ATCC 49049 / DSM 4359 / NBRC 107923 / NS-E)).